The primary structure comprises 506 residues: MQVKVRYAPSPTGFQHIGGVRTALFNYLFARSKGGKFVLRIEDTDRTRYSEEYEQNLYDTLEWLGLEWDEGGPKGGPCAPYIQSQRFDIYRKYAQELVDKGFAYYCFCDSERLDRIRKIQTMNKMPPGYDRACRNLTDEEIKAKMDEGIPYVIRLKVPLEGSTKFTDALLGDIEWKNEDINPDQILLKSDGFPTYHLANIVDDHLMGITHVMRAQEWLPSTPMHVIMYKAFGWEPPQFCHLPMVMGNDGQKLSKRHGATSCNEFRNKGYLKEAIINYVAMLGCSYEDGRDMYSLSDLEKLFDIKHLNKAPAVFDYKKLEWFNGQYMREKTDEELFALTWPYIANSGLFGKINEEELKKAGCRFENQTYLKPTQEQKEILMKVMPLVKERLHLLSEITEMVRFLFEEPAVPPAEEIIPKKLDAETTKKVLQKAIEVMPKILGLDDHAGGEVFRAEADAMGIKMGDFMMPVRMTVTGSRISPPLVGSIQILGIEKAIKRIEKAIAERF.

The 'HIGH' region signature appears at 9–19 (PSPTGFQHIGG). Residues 251-255 (KLSKR) carry the 'KMSKS' region motif. Lys254 is an ATP binding site.

The protein belongs to the class-I aminoacyl-tRNA synthetase family. Glutamate--tRNA ligase type 1 subfamily. Monomer.

It localises to the cytoplasm. It catalyses the reaction tRNA(Glu) + L-glutamate + ATP = L-glutamyl-tRNA(Glu) + AMP + diphosphate. Functionally, catalyzes the attachment of glutamate to tRNA(Glu) in a two-step reaction: glutamate is first activated by ATP to form Glu-AMP and then transferred to the acceptor end of tRNA(Glu). The protein is Glutamate--tRNA ligase of Treponema denticola (strain ATCC 35405 / DSM 14222 / CIP 103919 / JCM 8153 / KCTC 15104).